Reading from the N-terminus, the 507-residue chain is Anaerobic nitric oxide reductase transcription regulator NorR (507 aa).

D57 is modified (4-aspartylphosphate). The region spanning 188 to 417 is the Sigma-54 factor interaction domain; that stretch reads IIGLSSVMQQ…LEHSIYRAAI (230 aa). ATP contacts are provided by residues 216 to 223 and 279 to 288; these read GETGVGKE and ADNGTLFLDE. The H-T-H motif DNA-binding region spans 483-502; it reads WAATARKLELDSGNLHRLAK.

It functions in the pathway nitrogen metabolism; nitric oxide reduction. Its function is as follows. Required for the expression of anaerobic nitric oxide (NO) reductase, acts as a transcriptional activator for at least the norVW operon. Activation also requires sigma-54. This chain is Anaerobic nitric oxide reductase transcription regulator NorR, found in Serratia proteamaculans (strain 568).